Here is a 282-residue protein sequence, read N- to C-terminus: Elongation factor Ts (282 aa).

Residues 80–83 (TDFV) are involved in Mg(2+) ion dislocation from EF-Tu.

Belongs to the EF-Ts family.

It is found in the cytoplasm. Functionally, associates with the EF-Tu.GDP complex and induces the exchange of GDP to GTP. It remains bound to the aminoacyl-tRNA.EF-Tu.GTP complex up to the GTP hydrolysis stage on the ribosome. This chain is Elongation factor Ts (tsf), found in Chlamydia pneumoniae (Chlamydophila pneumoniae).